The chain runs to 967 residues: Phosphoenolpyruvate carboxylase 1 (967 aa).

A Phosphoserine modification is found at serine 11. Residues histidine 173 and lysine 602 contribute to the active site. Phosphoserine is present on serine 704.

It belongs to the PEPCase type 1 family. In terms of assembly, homotetramer. It depends on Mg(2+) as a cofactor. Requires Mn(2+) as cofactor. In terms of processing, the phosphorylation of Ser-11 is reversibly promoted by inorganic phosphate (Pi) deprivation. Enhanced activity by phosphorylation at pH 7.3 by lowering Km and sensitivity to inhibition by L-malate and L-aspartate, while enhancing activation by glucose 6-phosphate. As to expression, expressed in all plant organs, with higher levels in roots.

The protein localises to the cytoplasm. The enzyme catalyses oxaloacetate + phosphate = phosphoenolpyruvate + hydrogencarbonate. With respect to regulation, by light-reversible phosphorylation. Activated by inorganic phosphate (Pi) deprivation and glucose 6-phosphate. Inhibited by L-malate and L-aspartate. Its function is as follows. Through the carboxylation of phosphoenolpyruvate (PEP) it forms oxaloacetate, a four-carbon dicarboxylic acid source for the tricarboxylic acid cycle. Contributes probably to the adaptation to inorganic phosphate (Pi) deprivation. In Arabidopsis thaliana (Mouse-ear cress), this protein is Phosphoenolpyruvate carboxylase 1 (PPC1).